The following is a 176-amino-acid chain: Inner membrane-spanning protein YciB (176 aa).

Helical transmembrane passes span 24-44 (TATA…AFRH), 49-69 (PMLW…LVLH), 76-96 (WKPT…QLAF), 119-139 (LSVV…FVAY), and 149-169 (FKLF…SLWL).

The protein belongs to the YciB family.

The protein resides in the cell inner membrane. Its function is as follows. Plays a role in cell envelope biogenesis, maintenance of cell envelope integrity and membrane homeostasis. The protein is Inner membrane-spanning protein YciB of Paraburkholderia phytofirmans (strain DSM 17436 / LMG 22146 / PsJN) (Burkholderia phytofirmans).